The chain runs to 88 residues: Small ribosomal subunit protein eS21 (88 aa).

It belongs to the eukaryotic ribosomal protein eS21 family. In terms of assembly, component of the small ribosomal subunit. Mature ribosomes consist of a small (40S) and a large (60S) subunit. The 40S subunit contains about 33 different proteins and 1 molecule of RNA (18S). The 60S subunit contains about 49 different proteins and 3 molecules of RNA (25S, 5.8S and 5S).

The protein resides in the cytoplasm. Required for the processing of the 20S rRNA-precursor to mature 18S rRNA in a late step of the maturation of 40S ribosomal subunits. Has a physiological role leading to 18S rRNA stability. The polypeptide is Small ribosomal subunit protein eS21 (rps21) (Aspergillus fumigatus (strain ATCC MYA-4609 / CBS 101355 / FGSC A1100 / Af293) (Neosartorya fumigata)).